Reading from the N-terminus, the 269-residue chain is Cytochrome c oxidase subunit 3 (269 aa).

The next 7 membrane-spanning stretches (helical) occupy residues 24-44 (LFTS…MHGF), 46-66 (GFQY…GLWF), 90-110 (GVGL…WAFF), 138-160 (PLLN…HSLI), 167-187 (ALYG…FQGV), 207-227 (FGTG…AVGL), and 247-267 (ILYW…VYYW).

It belongs to the cytochrome c oxidase subunit 3 family. Component of the cytochrome c oxidase (complex IV, CIV), a multisubunit enzyme composed of a catalytic core of 3 subunits and several supernumerary subunits. The complex exists as a monomer or a dimer and forms supercomplexes (SCs) in the inner mitochondrial membrane with ubiquinol-cytochrome c oxidoreductase (cytochrome b-c1 complex, complex III, CIII).

The protein localises to the mitochondrion inner membrane. It carries out the reaction 4 Fe(II)-[cytochrome c] + O2 + 8 H(+)(in) = 4 Fe(III)-[cytochrome c] + 2 H2O + 4 H(+)(out). Component of the cytochrome c oxidase, the last enzyme in the mitochondrial electron transport chain which drives oxidative phosphorylation. The respiratory chain contains 3 multisubunit complexes succinate dehydrogenase (complex II, CII), ubiquinol-cytochrome c oxidoreductase (cytochrome b-c1 complex, complex III, CIII) and cytochrome c oxidase (complex IV, CIV), that cooperate to transfer electrons derived from NADH and succinate to molecular oxygen, creating an electrochemical gradient over the inner membrane that drives transmembrane transport and the ATP synthase. Cytochrome c oxidase is the component of the respiratory chain that catalyzes the reduction of oxygen to water. Electrons originating from reduced cytochrome c in the intermembrane space (IMS) are transferred via the dinuclear copper A center (CU(A)) of subunit 2 and heme A of subunit 1 to the active site in subunit 1, a binuclear center (BNC) formed by heme A3 and copper B (CU(B)). The BNC reduces molecular oxygen to 2 water molecules using 4 electrons from cytochrome c in the IMS and 4 protons from the mitochondrial matrix. The sequence is that of Cytochrome c oxidase subunit 3 (cox3) from Emericella nidulans (Aspergillus nidulans).